We begin with the raw amino-acid sequence, 65 residues long: uncharacterized protein (65 aa).

Helical transmembrane passes span A4 to L24 and L39 to F59.

Its subcellular location is the membrane. This is an uncharacterized protein from Streptococcus pneumoniae serotype 2 (strain D39 / NCTC 7466).